A 352-amino-acid polypeptide reads, in one-letter code: C-C chemokine receptor type 5 (352 aa).

The Extracellular portion of the chain corresponds to 1 to 30 (MDYQVSSPTYDIDYYTSEPCQKINVKQIAA). At tyrosine 3 the chain carries Sulfotyrosine. 2 O-linked (GalNAc...) serine glycosylation sites follow: serine 6 and serine 7. 3 positions are modified to sulfotyrosine: tyrosine 10, tyrosine 14, and tyrosine 15. Cystine bridges form between cysteine 20/cysteine 269 and cysteine 101/cysteine 178. A helical transmembrane segment spans residues 31-58 (HLLPPLYSLVFIFGFVGNILVVLILINC). Over 59 to 68 (KRLKSMTDIY) the chain is Cytoplasmic. The chain crosses the membrane as a helical span at residues 69–89 (LLNLAISDLLFLLTVPFWAHY). The Extracellular segment spans residues 90–102 (AAAQWDFGNIMCQ). A helical membrane pass occupies residues 103–124 (LLTGLYFIGFFSGIFFIILLTI). The Cytoplasmic segment spans residues 125–141 (DRYLAIVHAVFALKART). A helical transmembrane segment spans residues 142–166 (VTFGVVTSVITWVVAVFASLPGIIF). The Extracellular segment spans residues 167-198 (TRSQREGLHYTCSSHFPYSQYQFWKNFRTLKI). The chain crosses the membrane as a helical span at residues 199–218 (VILGLVLPLLVMVICYSGIL). The Cytoplasmic segment spans residues 219–235 (KTLLRCRNEKKRHRAVR). A helical transmembrane segment spans residues 236–260 (LIFTIMIVYFLFWAPYNIVLLLNTF). Residues 261 to 277 (QEFFGLNNCSSSNRLDQ) are Extracellular-facing. The chain crosses the membrane as a helical span at residues 278–301 (AMQVTETLGMTHCCINPIIYAFVG). Residues 302-352 (EKFRNYLLVFFQKHIAKRFCKCCSIFQQEAPERASSVYTRSTGEQEISVGL) are Cytoplasmic-facing. 3 S-palmitoyl cysteine lipidation sites follow: cysteine 321, cysteine 323, and cysteine 324. Phosphoserine; by BARK1 occurs at positions 336, 337, 342, and 349.

Belongs to the G-protein coupled receptor 1 family. As to quaternary structure, interacts with PRAF2. Efficient ligand binding to CCL3/MIP-1alpha and CCL4/MIP-1beta requires sulfation, O-glycosylation and sialic acid modifications. Glycosylation on Ser-6 is required for efficient binding of CCL4. Interacts with GRK2. Interacts with ARRB1 and ARRB2. Interacts with CNIH4. Interacts with S100A4; this interaction stimulates T-lymphocyte chemotaxis. In terms of processing, sulfated on at least 2 of the N-terminal tyrosines. Sulfation is required for efficient binding of the chemokines, CCL3 and CCL4. Palmitoylation in the C-terminal is important for cell surface expression. Post-translationally, phosphorylation on serine residues in the C-terminal is stimulated by binding CC chemokines especially by APO-RANTES. In terms of processing, O-glycosylated, but not N-glycosylated. Ser-6 appears to be the major site even if Ser-7 may be also O-glycosylated. Also sialylated glycans present which contribute to chemokine binding. Thr-16 and Ser-17 may also be glycosylated and, if so, with small moieties such as a T-antigen.

It is found in the cell membrane. In terms of biological role, receptor for a number of inflammatory CC-chemokines including CCL3/MIP-1-alpha, CCL4/MIP-1-beta and RANTES and subsequently transduces a signal by increasing the intracellular calcium ion level. May play a role in the control of granulocytic lineage proliferation or differentiation. Participates in T-lymphocyte migration to the infection site by acting as a chemotactic receptor. The polypeptide is C-C chemokine receptor type 5 (CCR5) (Mandrillus sphinx (Mandrill)).